The chain runs to 159 residues: Small ribosomal subunit protein uS9 (159 aa).

Belongs to the universal ribosomal protein uS9 family.

This chain is Small ribosomal subunit protein uS9, found in Rickettsia africae (strain ESF-5).